The primary structure comprises 134 residues: Small ribosomal subunit protein uS9c (134 aa).

This sequence belongs to the universal ribosomal protein uS9 family.

It localises to the plastid. The protein localises to the chloroplast. The sequence is that of Small ribosomal subunit protein uS9c (rps9) from Euglena gracilis.